The sequence spans 382 residues: Pyrimidine monooxygenase RutA (382 aa).

FMN-binding positions include 68-69 (IK), Asn134, Glu143, 159-160 (RY), and Ser209.

This sequence belongs to the NtaA/SnaA/DszA monooxygenase family. RutA subfamily.

The catalysed reaction is uracil + FMNH2 + NADH + O2 = (Z)-3-ureidoacrylate + FMN + NAD(+) + H2O + H(+). The enzyme catalyses thymine + FMNH2 + NADH + O2 = (Z)-2-methylureidoacrylate + FMN + NAD(+) + H2O + H(+). In terms of biological role, catalyzes the pyrimidine ring opening between N-3 and C-4 by an unusual flavin hydroperoxide-catalyzed mechanism, adding oxygen atoms in the process to yield ureidoacrylate peracid, that immediately reacts with FMN forming ureidoacrylate and FMN-N(5)-oxide. The FMN-N(5)-oxide reacts spontaneously with NADH to produce FMN. Requires the flavin reductase RutF to regenerate FMN in vivo. The sequence is that of Pyrimidine monooxygenase RutA from Escherichia coli (strain B / BL21-DE3).